The following is a 372-amino-acid chain: PqqA peptide cyclase (372 aa).

A Radical SAM core domain is found at 4-220 (APPPLSVLLE…ETARRQLGDR (217 aa)). Residues Cys18, Cys22, and Cys25 each coordinate [4Fe-4S] cluster. A disordered region spans residues 342–372 (ATAEQESASPAPAFIYRRPERPAAATADPLE).

It belongs to the radical SAM superfamily. PqqE family. As to quaternary structure, interacts with PqqD. The interaction is necessary for activity of PqqE. [4Fe-4S] cluster serves as cofactor.

It carries out the reaction [PQQ precursor protein] + S-adenosyl-L-methionine = E-Y cross-linked-[PQQ precursor protein] + 5'-deoxyadenosine + L-methionine + H(+). It participates in cofactor biosynthesis; pyrroloquinoline quinone biosynthesis. Catalyzes the cross-linking of a glutamate residue and a tyrosine residue in the PqqA protein as part of the biosynthesis of pyrroloquinoline quinone (PQQ). In Xanthomonas euvesicatoria pv. vesicatoria (strain 85-10) (Xanthomonas campestris pv. vesicatoria), this protein is PqqA peptide cyclase.